A 157-amino-acid polypeptide reads, in one-letter code: Large ribosomal subunit protein uL15 (157 aa).

This sequence belongs to the universal ribosomal protein uL15 family. As to quaternary structure, part of the 50S ribosomal subunit.

Its function is as follows. Binds to the 23S rRNA. The polypeptide is Large ribosomal subunit protein uL15 (Ehrlichia ruminantium (strain Welgevonden)).